Reading from the N-terminus, the 33-residue chain is Photosystem II reaction center protein Psb30 (33 aa).

A helical membrane pass occupies residues 5 to 25; the sequence is ILSQLIAIAVTLFLGPVVVIL.

It belongs to the Psb30/Ycf12 family. As to quaternary structure, PSII is composed of 1 copy each of membrane proteins PsbA, PsbB, PsbC, PsbD, PsbE, PsbF, PsbH, PsbI, PsbJ, PsbK, PsbL, PsbM, PsbT, PsbX, PsbY, PsbZ, Psb30/Ycf12, peripheral proteins of the oxygen-evolving complex and a large number of cofactors. It forms dimeric complexes.

The protein localises to the plastid. It localises to the chloroplast thylakoid membrane. In terms of biological role, a core subunit of photosystem II (PSII), probably helps stabilize the reaction center. In Oedogonium cardiacum (Filamentous green alga), this protein is Photosystem II reaction center protein Psb30.